Consider the following 415-residue polypeptide: Methylaspartate ammonia-lyase 2 (415 aa).

(2S,3S)-3-methyl-L-aspartate is bound at residue Gln173. 3 residues coordinate Mg(2+): Asp238, Glu273, and Asp307. Gln329 serves as a coordination point for (2S,3S)-3-methyl-L-aspartate. The Proton acceptor role is filled by Lys331. Residue 360 to 361 (TC) coordinates (2S,3S)-3-methyl-L-aspartate.

Belongs to the methylaspartate ammonia-lyase family. Homodimer. The cofactor is Mg(2+).

The enzyme catalyses (2S,3S)-3-methyl-L-aspartate = mesaconate + NH4(+). The protein operates within amino-acid degradation; L-glutamate degradation via mesaconate pathway; acetate and pyruvate from L-glutamate: step 2/4. Functionally, involved in the methylaspartate cycle. Catalyzes the formation of the alpha,beta-unsaturated bond by the reversible anti elimination of ammonia from L-threo-beta-methylaspartate (L-threo-(2S,3S)-3-methylaspartate) to give mesaconate. The polypeptide is Methylaspartate ammonia-lyase 2 (Carboxydothermus hydrogenoformans (strain ATCC BAA-161 / DSM 6008 / Z-2901)).